Here is a 431-residue protein sequence, read N- to C-terminus: Ribosomal protein uS12 methylthiotransferase RimO (431 aa).

The MTTase N-terminal domain occupies 4–120; that stretch reads LKLYVIVLGC…LAESINKTKK (117 aa). [4Fe-4S] cluster is bound by residues Cys-13, Cys-49, Cys-83, Cys-150, Cys-154, and Cys-157. Residues 136–365 enclose the Radical SAM core domain; the sequence is DSDLPYAYVK…MEVQAEISFL (230 aa). The TRAM domain occupies 368–431; sequence QRLVGKVIDV…TYDLEGELVE (64 aa).

This sequence belongs to the methylthiotransferase family. RimO subfamily. [4Fe-4S] cluster is required as a cofactor.

It localises to the cytoplasm. It catalyses the reaction L-aspartate(89)-[ribosomal protein uS12]-hydrogen + (sulfur carrier)-SH + AH2 + 2 S-adenosyl-L-methionine = 3-methylsulfanyl-L-aspartate(89)-[ribosomal protein uS12]-hydrogen + (sulfur carrier)-H + 5'-deoxyadenosine + L-methionine + A + S-adenosyl-L-homocysteine + 2 H(+). Catalyzes the methylthiolation of an aspartic acid residue of ribosomal protein uS12. The chain is Ribosomal protein uS12 methylthiotransferase RimO from Fervidobacterium nodosum (strain ATCC 35602 / DSM 5306 / Rt17-B1).